The chain runs to 349 residues: Quinolinate synthase (349 aa).

Positions 52 and 69 each coordinate iminosuccinate. C114 contacts [4Fe-4S] cluster. Iminosuccinate-binding positions include 140–142 (YVN) and S157. Residue C201 participates in [4Fe-4S] cluster binding. Residues 227-229 (HPE) and T255 contribute to the iminosuccinate site. C300 contributes to the [4Fe-4S] cluster binding site.

Belongs to the quinolinate synthase family. Type 2 subfamily. The cofactor is [4Fe-4S] cluster.

The protein resides in the cytoplasm. The enzyme catalyses iminosuccinate + dihydroxyacetone phosphate = quinolinate + phosphate + 2 H2O + H(+). It functions in the pathway cofactor biosynthesis; NAD(+) biosynthesis; quinolinate from iminoaspartate: step 1/1. Catalyzes the condensation of iminoaspartate with dihydroxyacetone phosphate to form quinolinate. This Mycobacterium bovis (strain BCG / Tokyo 172 / ATCC 35737 / TMC 1019) protein is Quinolinate synthase.